A 291-amino-acid polypeptide reads, in one-letter code: E3 ubiquitin-protein ligase RZFP34 (291 aa).

The CHY-type zinc finger occupies 20-96 (IGSGHYGCSH…VQQNCSNCGV (77 aa)). The Zn(2+) site is built by Cys-27, His-29, Cys-40, Cys-41, Cys-47, Cys-50, His-51, His-66, Cys-78, Cys-81, Cys-91, Cys-94, Cys-103, Cys-106, His-119, Cys-120, Cys-123, Cys-126, His-136, Cys-137, Cys-140, Cys-143, His-152, and Cys-154. The CTCHY-type zinc-finger motif lies at 98-162 (MGKYFCSKCK…QCVEGAMHHN (65 aa)). An RING-type; atypical zinc finger spans residues 163–206 (CPVCFEYLFDSTRDITVLRCGHTMHLECTKDMGLHNRYTCPVCS). Phosphoserine is present on Ser-173. The residue at position 178 (Thr-178) is a Phosphothreonine. A Phosphoserine modification is found at Ser-208. The disordered stretch occupies residues 271–291 (QRGSDSHSCSSGMPQVVGSTG).

Interacts with SRK2D/2SNRK2.2, SRK2I/SNRK2.3 and SRK2E/SNRK2.6. Post-translationally, phosphorylated at Ser-173, Thr-178 and Ser-208 by SRK2E/SNRK2.6 in response to abscisic acid (ABA). Phosphorylation activates its E3 ubiquitin-protein ligase activity. Expressed in roots, leaves, and anthers and stigma of open flowers.

The protein resides in the nucleus. Its subcellular location is the cytoplasm. The protein localises to the endoplasmic reticulum. The enzyme catalyses S-ubiquitinyl-[E2 ubiquitin-conjugating enzyme]-L-cysteine + [acceptor protein]-L-lysine = [E2 ubiquitin-conjugating enzyme]-L-cysteine + N(6)-ubiquitinyl-[acceptor protein]-L-lysine.. Its pathway is protein modification; protein ubiquitination. In terms of biological role, possesses E3 ubiquitin-protein ligase activity in vitro. Mediates mainly 'Lys-48'-linked polyubiquitination. Promotes abscisic acid (ABA)-induced stomatal closure, reactive oxygen species (ROS) production and drought tolerance. Involved in the regulation of stomatal aperture. This Arabidopsis thaliana (Mouse-ear cress) protein is E3 ubiquitin-protein ligase RZFP34.